Reading from the N-terminus, the 125-residue chain is UPF0102 protein CCNA_00142 (125 aa).

This sequence belongs to the UPF0102 family.

In Caulobacter vibrioides (strain NA1000 / CB15N) (Caulobacter crescentus), this protein is UPF0102 protein CCNA_00142.